Reading from the N-terminus, the 106-residue chain is Iron-sulfur cluster assembly protein CyaY (106 aa).

This sequence belongs to the frataxin family.

Involved in iron-sulfur (Fe-S) cluster assembly. May act as a regulator of Fe-S biogenesis. This is Iron-sulfur cluster assembly protein CyaY from Pectobacterium atrosepticum (strain SCRI 1043 / ATCC BAA-672) (Erwinia carotovora subsp. atroseptica).